A 208-amino-acid polypeptide reads, in one-letter code: ATP-dependent Clp protease proteolytic subunit 1 (208 aa).

Serine 108 acts as the Nucleophile in catalysis. Histidine 133 is an active-site residue.

It belongs to the peptidase S14 family. Fourteen ClpP subunits assemble into 2 heptameric rings which stack back to back to give a disk-like structure with a central cavity, resembling the structure of eukaryotic proteasomes.

The protein localises to the cytoplasm. The enzyme catalyses Hydrolysis of proteins to small peptides in the presence of ATP and magnesium. alpha-casein is the usual test substrate. In the absence of ATP, only oligopeptides shorter than five residues are hydrolyzed (such as succinyl-Leu-Tyr-|-NHMec, and Leu-Tyr-Leu-|-Tyr-Trp, in which cleavage of the -Tyr-|-Leu- and -Tyr-|-Trp bonds also occurs).. Cleaves peptides in various proteins in a process that requires ATP hydrolysis. Has a chymotrypsin-like activity. Plays a major role in the degradation of misfolded proteins. This Corynebacterium glutamicum (strain ATCC 13032 / DSM 20300 / JCM 1318 / BCRC 11384 / CCUG 27702 / LMG 3730 / NBRC 12168 / NCIMB 10025 / NRRL B-2784 / 534) protein is ATP-dependent Clp protease proteolytic subunit 1.